A 132-amino-acid chain; its full sequence is Protein LEKR1 (132 aa).

Residues 37–116 adopt a coiled-coil conformation; sequence FKAMEEKVKA…KKQLSHLQDE (80 aa).

The polypeptide is Protein LEKR1 (LEKR1) (Homo sapiens (Human)).